Here is a 20-residue protein sequence, read N- to C-terminus: Chrysophsin-3 (20 aa).

Histidine 20 carries the post-translational modification Histidine amide.

In terms of tissue distribution, gill.

It localises to the secreted. Has antibacterial activity against Gram-positive bacteria B.subtilis ATCC 6633, L.garvieae ATCC 49156 and S.iniae F-8502, and Gram-negative bacteria E.coli WT-2, V.anguillarum ATCC 19264, V.penaeicida KHA, V.harveyi ATCC 14126, V.vulnificus ATCC 33148, A.salmonicida NCMB 1102 and P.putida ATCC 12633. Has hemolytic activity against human red blood cells. Seems to disrupt the membranes by adopting an alpha helical conformation. May play a significant role in innate host defense. This is Chrysophsin-3 from Pagrus major (Red sea bream).